A 316-amino-acid chain; its full sequence is 4-hydroxy-3-methylbut-2-enyl diphosphate reductase (316 aa).

Cysteine 12 provides a ligand contact to [4Fe-4S] cluster. Residues histidine 41 and histidine 74 each coordinate (2E)-4-hydroxy-3-methylbut-2-enyl diphosphate. Dimethylallyl diphosphate contacts are provided by histidine 41 and histidine 74. Positions 41 and 74 each coordinate isopentenyl diphosphate. Position 96 (cysteine 96) interacts with [4Fe-4S] cluster. Histidine 124 contributes to the (2E)-4-hydroxy-3-methylbut-2-enyl diphosphate binding site. Histidine 124 is a binding site for dimethylallyl diphosphate. Histidine 124 is an isopentenyl diphosphate binding site. The active-site Proton donor is glutamate 126. Threonine 169 provides a ligand contact to (2E)-4-hydroxy-3-methylbut-2-enyl diphosphate. Residue cysteine 199 coordinates [4Fe-4S] cluster. Residues serine 227, serine 228, asparagine 229, and serine 271 each contribute to the (2E)-4-hydroxy-3-methylbut-2-enyl diphosphate site. Serine 227, serine 228, asparagine 229, and serine 271 together coordinate dimethylallyl diphosphate. Serine 227, serine 228, asparagine 229, and serine 271 together coordinate isopentenyl diphosphate.

Belongs to the IspH family. The cofactor is [4Fe-4S] cluster.

The catalysed reaction is isopentenyl diphosphate + 2 oxidized [2Fe-2S]-[ferredoxin] + H2O = (2E)-4-hydroxy-3-methylbut-2-enyl diphosphate + 2 reduced [2Fe-2S]-[ferredoxin] + 2 H(+). It catalyses the reaction dimethylallyl diphosphate + 2 oxidized [2Fe-2S]-[ferredoxin] + H2O = (2E)-4-hydroxy-3-methylbut-2-enyl diphosphate + 2 reduced [2Fe-2S]-[ferredoxin] + 2 H(+). Its pathway is isoprenoid biosynthesis; dimethylallyl diphosphate biosynthesis; dimethylallyl diphosphate from (2E)-4-hydroxy-3-methylbutenyl diphosphate: step 1/1. The protein operates within isoprenoid biosynthesis; isopentenyl diphosphate biosynthesis via DXP pathway; isopentenyl diphosphate from 1-deoxy-D-xylulose 5-phosphate: step 6/6. Its function is as follows. Catalyzes the conversion of 1-hydroxy-2-methyl-2-(E)-butenyl 4-diphosphate (HMBPP) into a mixture of isopentenyl diphosphate (IPP) and dimethylallyl diphosphate (DMAPP). Acts in the terminal step of the DOXP/MEP pathway for isoprenoid precursor biosynthesis. The polypeptide is 4-hydroxy-3-methylbut-2-enyl diphosphate reductase (Xanthomonas oryzae pv. oryzae (strain MAFF 311018)).